We begin with the raw amino-acid sequence, 714 residues long: Fatty acid oxidation complex subunit alpha (714 aa).

An enoyl-CoA hydratase region spans residues 1-190 (MEMASAFTLN…KLGLVDDVVP (190 aa)). The 3-hydroxyacyl-CoA dehydrogenase stretch occupies residues 306-714 (APLNSVGILG…FWKTTATDLQ (409 aa)).

It in the N-terminal section; belongs to the enoyl-CoA hydratase/isomerase family. In the central section; belongs to the 3-hydroxyacyl-CoA dehydrogenase family. Heterotetramer of two alpha chains (FadJ) and two beta chains (FadI).

The protein localises to the cytoplasm. It catalyses the reaction a (3S)-3-hydroxyacyl-CoA = a (2E)-enoyl-CoA + H2O. The enzyme catalyses a 4-saturated-(3S)-3-hydroxyacyl-CoA = a (3E)-enoyl-CoA + H2O. The catalysed reaction is a (3S)-3-hydroxyacyl-CoA + NAD(+) = a 3-oxoacyl-CoA + NADH + H(+). It carries out the reaction (3S)-3-hydroxybutanoyl-CoA = (3R)-3-hydroxybutanoyl-CoA. It participates in lipid metabolism; fatty acid beta-oxidation. Catalyzes the formation of a hydroxyacyl-CoA by addition of water on enoyl-CoA. Also exhibits 3-hydroxyacyl-CoA epimerase and 3-hydroxyacyl-CoA dehydrogenase activities. The polypeptide is Fatty acid oxidation complex subunit alpha (Escherichia coli O6:H1 (strain CFT073 / ATCC 700928 / UPEC)).